The chain runs to 253 residues: Retinoic acid early-inducible protein 1-beta (253 aa).

The signal sequence occupies residues 1 to 28 (MAKAAVTKRHHFMIQKLLILLSYGYTNG). A disulfide bridge connects residues Cys37 and Cys56. 5 N-linked (GlcNAc...) asparagine glycosylation sites follow: Asn38, Asn70, Asn83, Asn143, and Asn156. Residues Cys90 and Cys190 are joined by a disulfide bond. The disordered stretch occupies residues 198–230 (LKQSKEKPRSTSRSPSITQLTSTSPLPPPSHST). Residues 211–221 (SPSITQLTSTS) show a composition bias toward low complexity. Ser229 carries the GPI-anchor amidated serine lipid modification. Positions 230–253 (TSKKGFISVGLIFISLLFAFAFAM) are cleaved as a propeptide — removed in mature form.

This sequence belongs to the NKG2D ligand family. Post-translationally, glycosylated. In terms of tissue distribution, expressed predominantly in embryonic brain.

It localises to the cell membrane. Functionally, acts as a ligand for KLRK1. The protein is Retinoic acid early-inducible protein 1-beta (Raet1b) of Mus musculus (Mouse).